The sequence spans 279 residues: MTTRIDTKFAELKAEGRPALVTYFMGGDPDLETALKVMKALPKAGADVIELGMPFSDPMADGPAIQAAGLRALNAGQTLAKTLYMAAKFRKEDDTTPIVMMGYYNLIYIYGVERFLTDAKASGVDGLIVVDLPSEMDAELCIPAMKAGINFIRLTTPTTDDKRLPKVLHNSSGFVYYVSMNGITGAAIADTAKVGEAVRHIKKSTDLPICVGFGVKTPEQAAAIATHADGVVVGTAIVNAIAGELDEKGKVKGDPVAAATRLVHALAESVRATRLEAAQ.

Residues glutamate 50 and aspartate 61 each act as proton acceptor in the active site.

The protein belongs to the TrpA family. In terms of assembly, tetramer of two alpha and two beta chains.

The catalysed reaction is (1S,2R)-1-C-(indol-3-yl)glycerol 3-phosphate + L-serine = D-glyceraldehyde 3-phosphate + L-tryptophan + H2O. The protein operates within amino-acid biosynthesis; L-tryptophan biosynthesis; L-tryptophan from chorismate: step 5/5. Functionally, the alpha subunit is responsible for the aldol cleavage of indoleglycerol phosphate to indole and glyceraldehyde 3-phosphate. In Brucella melitensis biotype 2 (strain ATCC 23457), this protein is Tryptophan synthase alpha chain.